Here is a 145-residue protein sequence, read N- to C-terminus: Putative pre-16S rRNA nuclease (145 aa).

It belongs to the YqgF nuclease family.

Its subcellular location is the cytoplasm. Its function is as follows. Could be a nuclease involved in processing of the 5'-end of pre-16S rRNA. This chain is Putative pre-16S rRNA nuclease, found in Pseudomonas fluorescens.